Consider the following 428-residue polypeptide: 3-phosphoshikimate 1-carboxyvinyltransferase (428 aa).

Residues K22, S23, and R27 each coordinate 3-phosphoshikimate. Residue K22 coordinates phosphoenolpyruvate. Phosphoenolpyruvate-binding residues include G96 and R124. S169, S170, Q171, S197, D313, N336, and K340 together coordinate 3-phosphoshikimate. Q171 contributes to the phosphoenolpyruvate binding site. Residue D313 is the Proton acceptor of the active site. The phosphoenolpyruvate site is built by R344, R386, and K411.

The protein belongs to the EPSP synthase family. In terms of assembly, monomer.

Its subcellular location is the cytoplasm. The catalysed reaction is 3-phosphoshikimate + phosphoenolpyruvate = 5-O-(1-carboxyvinyl)-3-phosphoshikimate + phosphate. Its pathway is metabolic intermediate biosynthesis; chorismate biosynthesis; chorismate from D-erythrose 4-phosphate and phosphoenolpyruvate: step 6/7. Functionally, catalyzes the transfer of the enolpyruvyl moiety of phosphoenolpyruvate (PEP) to the 5-hydroxyl of shikimate-3-phosphate (S3P) to produce enolpyruvyl shikimate-3-phosphate and inorganic phosphate. The polypeptide is 3-phosphoshikimate 1-carboxyvinyltransferase (Photorhabdus laumondii subsp. laumondii (strain DSM 15139 / CIP 105565 / TT01) (Photorhabdus luminescens subsp. laumondii)).